The primary structure comprises 184 residues: ATP synthase subunit b, chloroplastic (184 aa).

A helical transmembrane segment spans residues 27 to 49 (LATNPINLSVVFGVLIFFGKGVL).

The protein belongs to the ATPase B chain family. As to quaternary structure, F-type ATPases have 2 components, F(1) - the catalytic core - and F(0) - the membrane proton channel. F(1) has five subunits: alpha(3), beta(3), gamma(1), delta(1), epsilon(1). F(0) has four main subunits: a(1), b(1), b'(1) and c(10-14). The alpha and beta chains form an alternating ring which encloses part of the gamma chain. F(1) is attached to F(0) by a central stalk formed by the gamma and epsilon chains, while a peripheral stalk is formed by the delta, b and b' chains.

The protein resides in the plastid. The protein localises to the chloroplast thylakoid membrane. Its function is as follows. F(1)F(0) ATP synthase produces ATP from ADP in the presence of a proton or sodium gradient. F-type ATPases consist of two structural domains, F(1) containing the extramembraneous catalytic core and F(0) containing the membrane proton channel, linked together by a central stalk and a peripheral stalk. During catalysis, ATP synthesis in the catalytic domain of F(1) is coupled via a rotary mechanism of the central stalk subunits to proton translocation. In terms of biological role, component of the F(0) channel, it forms part of the peripheral stalk, linking F(1) to F(0). The protein is ATP synthase subunit b, chloroplastic of Nasturtium officinale (Watercress).